A 196-amino-acid chain; its full sequence is ATP-dependent Clp protease proteolytic subunit (196 aa).

Ser96 acts as the Nucleophile in catalysis. His121 is a catalytic residue.

The protein belongs to the peptidase S14 family. Fourteen ClpP subunits assemble into 2 heptameric rings which stack back to back to give a disk-like structure with a central cavity, resembling the structure of eukaryotic proteasomes.

It localises to the cytoplasm. The catalysed reaction is Hydrolysis of proteins to small peptides in the presence of ATP and magnesium. alpha-casein is the usual test substrate. In the absence of ATP, only oligopeptides shorter than five residues are hydrolyzed (such as succinyl-Leu-Tyr-|-NHMec, and Leu-Tyr-Leu-|-Tyr-Trp, in which cleavage of the -Tyr-|-Leu- and -Tyr-|-Trp bonds also occurs).. Its function is as follows. Cleaves peptides in various proteins in a process that requires ATP hydrolysis. Has a chymotrypsin-like activity. Plays a major role in the degradation of misfolded proteins. This Streptococcus pneumoniae (strain ATCC 700669 / Spain 23F-1) protein is ATP-dependent Clp protease proteolytic subunit.